Reading from the N-terminus, the 237-residue chain is tRNA-splicing endonuclease subunit Sen2-1 (237 aa).

Active-site residues include Y148, H156, and K190.

Belongs to the tRNA-intron endonuclease family. As to quaternary structure, tRNA splicing endonuclease is a heterotetramer composed of SEN2, SEN15, SEN34/LENG5 and SEN54.

The protein localises to the nucleus. It catalyses the reaction pretRNA = a 3'-half-tRNA molecule with a 5'-OH end + a 5'-half-tRNA molecule with a 2',3'-cyclic phosphate end + an intron with a 2',3'-cyclic phosphate and a 5'-hydroxyl terminus.. Constitutes one of the two catalytic subunit of the tRNA-splicing endonuclease complex, a complex responsible for identification and cleavage of the splice sites in pre-tRNA. It cleaves pre-tRNA at the 5'- and 3'-splice sites to release the intron. The products are an intron and two tRNA half-molecules bearing 2',3'-cyclic phosphate and 5'-OH termini. There are no conserved sequences at the splice sites, but the intron is invariably located at the same site in the gene, placing the splice sites an invariant distance from the constant structural features of the tRNA body. Probably carries the active site for 5'-splice site cleavage. This is tRNA-splicing endonuclease subunit Sen2-1 (SEN1) from Arabidopsis thaliana (Mouse-ear cress).